A 1037-amino-acid polypeptide reads, in one-letter code: Ras guanine nucleotide exchange factor E (1037 aa).

Residues 5–35 are a coiled coil; sequence ECNNRIEYLQNKVLELESLNENLKGQLEYFQ. Disordered stretches follow at residues 65–100, 114–150, 166–387, 414–437, 451–472, 602–628, 907–935, and 1004–1037; these read NNNN…TTNN, TNSN…ELSN, TTTT…PLSN, TVNM…LYHS, SSLS…LTNP, INSN…NQLE, NTTT…QQLN, and EKET…SFKS. Composition is skewed to low complexity over residues 114–145 and 166–200; these read TNSN…NNSN and TTTT…NNNN. Positions 229 to 239 are enriched in polar residues; sequence PTSSRNSPTNK. The span at 240 to 276 shows a compositional bias: low complexity; the sequence is SSPQFLSPLSKSPLSQSTQSTTVSSPSPSWTTTVPQS. Over residues 282-300 the composition is skewed to polar residues; that stretch reads TIVQSKSPYSPDTNISNKL. Residues 318–360 are compositionally biased toward low complexity; that stretch reads SPSKNSPRSLNSNNNNSSATTSITTPPTTSTPTPTTSTTTTTT. Residues 361 to 370 show a composition bias toward basic and acidic residues; that stretch reads TERRPEDRRS. Composition is skewed to polar residues over residues 372 to 387 and 424 to 437; these read TSPF…PLSN and PRSN…LYHS. The N-terminal Ras-GEF domain occupies 496–694; sequence NGFIVKGGTI…NLKRLLTNDR (199 aa). In terms of domain architecture, Ras-GEF spans 726-1003; sequence DPTEIARQLT…YKLSLICEPK (278 aa). Residues 907 to 930 are compositionally biased toward low complexity; it reads NTTTTTTTTTTTTTTNTTTSNNNN. Residues 1027–1037 are compositionally biased toward polar residues; that stretch reads SVTSLLNSFKS.

Promotes the exchange of Ras-bound GDP by GTP. Seems to play a role in chemotaxis. The chain is Ras guanine nucleotide exchange factor E (gefE) from Dictyostelium discoideum (Social amoeba).